The following is a 55-amino-acid chain: Histone H1 (55 aa).

Low complexity predominate over residues 1–15 (MAEVAPAPAAAAPAK). The tract at residues 1–28 (MAEVAPAPAAAAPAKAPKKKAAAKPKKA) is disordered. Position 2 is an N-acetylalanine (Ala2). A compositionally biased stretch (basic residues) spans 16-27 (APKKKAAAKPKK). The region spanning 28–55 (AGPSVGELIVKAVSASKERSGVSLAALK) is the H15 domain.

This sequence belongs to the histone H1/H5 family.

Its subcellular location is the nucleus. It localises to the chromosome. The protein resides in the secreted. In terms of biological role, histones H1 are necessary for the condensation of nucleosome chains into higher-order structures. Functionally, SAMP H1 has antibacterial activity against Gram-negative bacteria E.coli, A.salmonicida subsp salmonicida, V.anguillarum and S.typhimurium and Gram-positive bacteria B.subtilis and L.ivanovii. This Salmo salar (Atlantic salmon) protein is Histone H1.